We begin with the raw amino-acid sequence, 445 residues long: Chromosome partition protein MukF (445 aa).

The leucine-zipper stretch occupies residues 213-241 (LSETSNTLKELQDTLQAAGDELQTQILDI).

Belongs to the MukF family. As to quaternary structure, interacts, and probably forms a ternary complex, with MukE and MukB via its C-terminal region. The complex formation is stimulated by calcium or magnesium. It is required for an interaction between MukE and MukB.

It is found in the cytoplasm. Its subcellular location is the nucleoid. Functionally, involved in chromosome condensation, segregation and cell cycle progression. May participate in facilitating chromosome segregation by condensation DNA from both sides of a centrally located replisome during cell division. Not required for mini-F plasmid partitioning. Probably acts via its interaction with MukB and MukE. Overexpression results in anucleate cells. It has a calcium binding activity. The polypeptide is Chromosome partition protein MukF (Vibrio vulnificus (strain CMCP6)).